Reading from the N-terminus, the 107-residue chain is Iron-binding protein IscA (107 aa).

The Fe cation site is built by Cys-35, Cys-99, and Cys-101.

The protein belongs to the HesB/IscA family. As to quaternary structure, homodimer; may form tetramers and higher multimers. Requires Fe cation as cofactor.

Its function is as follows. Is able to transfer iron-sulfur clusters to apo-ferredoxin. Multiple cycles of [2Fe2S] cluster formation and transfer are observed, suggesting that IscA acts catalytically. Recruits intracellular free iron so as to provide iron for the assembly of transient iron-sulfur cluster in IscU in the presence of IscS, L-cysteine and the thioredoxin reductase system TrxA/TrxB. The polypeptide is Iron-binding protein IscA (Pectobacterium atrosepticum (strain SCRI 1043 / ATCC BAA-672) (Erwinia carotovora subsp. atroseptica)).